Here is a 192-residue protein sequence, read N- to C-terminus: 3-isopropylmalate dehydratase small subunit (192 aa).

It belongs to the LeuD family. LeuD type 1 subfamily. In terms of assembly, heterodimer of LeuC and LeuD.

The enzyme catalyses (2R,3S)-3-isopropylmalate = (2S)-2-isopropylmalate. It participates in amino-acid biosynthesis; L-leucine biosynthesis; L-leucine from 3-methyl-2-oxobutanoate: step 2/4. Its function is as follows. Catalyzes the isomerization between 2-isopropylmalate and 3-isopropylmalate, via the formation of 2-isopropylmaleate. In Zymomonas mobilis subsp. mobilis (strain ATCC 31821 / ZM4 / CP4), this protein is 3-isopropylmalate dehydratase small subunit.